Consider the following 383-residue polypeptide: Chaperone protein DnaJ (383 aa).

Positions 5-70 (DYYEALGVAR…QKRAAYDQFG (66 aa)) constitute a J domain. Residues 139–217 (GTEVQIRVPT…CGGRGRVQSQ (79 aa)) form a CR-type zinc finger. Residues cysteine 152, cysteine 155, cysteine 169, cysteine 172, cysteine 191, cysteine 194, cysteine 205, and cysteine 208 each coordinate Zn(2+). CXXCXGXG motif repeat units follow at residues 152–159 (CDACDGKG), 169–176 (CPTCKGHG), 191–198 (CPRCGGSG), and 205–212 (CRKCGGRG). A disordered region spans residues 230–249 (TGDRIRLSGEGEPGENGGPP).

Belongs to the DnaJ family. Homodimer. The cofactor is Zn(2+).

It localises to the cytoplasm. Its function is as follows. Participates actively in the response to hyperosmotic and heat shock by preventing the aggregation of stress-denatured proteins and by disaggregating proteins, also in an autonomous, DnaK-independent fashion. Unfolded proteins bind initially to DnaJ; upon interaction with the DnaJ-bound protein, DnaK hydrolyzes its bound ATP, resulting in the formation of a stable complex. GrpE releases ADP from DnaK; ATP binding to DnaK triggers the release of the substrate protein, thus completing the reaction cycle. Several rounds of ATP-dependent interactions between DnaJ, DnaK and GrpE are required for fully efficient folding. Also involved, together with DnaK and GrpE, in the DNA replication of plasmids through activation of initiation proteins. This Alkalilimnicola ehrlichii (strain ATCC BAA-1101 / DSM 17681 / MLHE-1) protein is Chaperone protein DnaJ.